The following is a 225-amino-acid chain: MKAFIVRVLLIFIGAILFIQLWIFSSLVWWRTHEVDTTMFMRIDYWSDTSEPIIHEWLDYDDISDNFKHAILAGEDAKFIHHHGFDWDGIRFALERNNEQGEVVAGGSTVSQQLAKNLFLYNKRSFIRKGQETVATWMMERMWSKRRILEVYMNSVEFGKNLYGVEAAAQYYYGKSAKNLTREQAAFLAALLPDPKYYQDHRNDRKLQYRKRVILRYMNSTQIPE.

The chain crosses the membrane as a helical span at residues 8 to 28; the sequence is VLLIFIGAILFIQLWIFSSLV.

The protein belongs to the glycosyltransferase 51 family.

Its subcellular location is the cell inner membrane. The enzyme catalyses [GlcNAc-(1-&gt;4)-Mur2Ac(oyl-L-Ala-gamma-D-Glu-L-Lys-D-Ala-D-Ala)](n)-di-trans,octa-cis-undecaprenyl diphosphate + beta-D-GlcNAc-(1-&gt;4)-Mur2Ac(oyl-L-Ala-gamma-D-Glu-L-Lys-D-Ala-D-Ala)-di-trans,octa-cis-undecaprenyl diphosphate = [GlcNAc-(1-&gt;4)-Mur2Ac(oyl-L-Ala-gamma-D-Glu-L-Lys-D-Ala-D-Ala)](n+1)-di-trans,octa-cis-undecaprenyl diphosphate + di-trans,octa-cis-undecaprenyl diphosphate + H(+). Its pathway is cell wall biogenesis; peptidoglycan biosynthesis. In terms of biological role, peptidoglycan polymerase that catalyzes glycan chain elongation from lipid-linked precursors. This is Biosynthetic peptidoglycan transglycosylase from Acinetobacter baumannii (strain ATCC 17978 / DSM 105126 / CIP 53.77 / LMG 1025 / NCDC KC755 / 5377).